The sequence spans 237 residues: Ribonuclease PH (237 aa).

Residues arginine 86 and 124–126 contribute to the phosphate site; that span reads GTR.

It belongs to the RNase PH family. As to quaternary structure, homohexameric ring arranged as a trimer of dimers.

It catalyses the reaction tRNA(n+1) + phosphate = tRNA(n) + a ribonucleoside 5'-diphosphate. In terms of biological role, phosphorolytic 3'-5' exoribonuclease that plays an important role in tRNA 3'-end maturation. Removes nucleotide residues following the 3'-CCA terminus of tRNAs; can also add nucleotides to the ends of RNA molecules by using nucleoside diphosphates as substrates, but this may not be physiologically important. Probably plays a role in initiation of 16S rRNA degradation (leading to ribosome degradation) during starvation. This is Ribonuclease PH from Pseudoalteromonas translucida (strain TAC 125).